Consider the following 439-residue polypeptide: Cytochrome b-c1 complex reductase subunit, mitochondrial (439 aa).

The N-terminal 17 residues, 1 to 17 (MIRGSSALKSLTSRRLY), are a transit peptide targeting the mitochondrion.

This sequence belongs to the peptidase M16 family. UQCRC1/QCR1 subfamily. As to quaternary structure, component of the ubiquinol-cytochrome c oxidoreductase (cytochrome b-c1 complex, complex III, CIII), a multisubunit enzyme composed of 10 subunits. The complex is composed of 3 respiratory subunits cytochrome b (COB), cytochrome c1 (CYT1) and Rieske protein (RIP1), 2 core protein subunits COR1 and QCR2, and 5 low-molecular weight protein subunits QCR6, QCR7, QCR8, QCR9 and QCR10. The complex exists as an obligatory dimer and forms supercomplexes (SCs) in the inner mitochondrial membrane with a monomer or a dimer of cytochrome c oxidase (complex IV, CIV), resulting in 2 different assemblies (supercomplexes III(2)IV and III(2)IV(2)).

It localises to the mitochondrion inner membrane. Functionally, component of the ubiquinol-cytochrome c oxidoreductase, a multisubunit transmembrane complex that is part of the mitochondrial electron transport chain which drives oxidative phosphorylation. The complex plays an important role in the uptake of multiple carbon sources present in different host niches. This Candida albicans (strain SC5314 / ATCC MYA-2876) (Yeast) protein is Cytochrome b-c1 complex reductase subunit, mitochondrial.